Reading from the N-terminus, the 394-residue chain is Actin-related protein 2 (394 aa).

Methionine 1 carries the N-acetylmethionine modification. ATP-binding positions include 160-162 (GDG) and 214-218 (RMIKE). Lysine 299 carries the N6-acetyllysine modification. Residue 305–310 (GGSTMY) participates in ATP binding. Lysine 322 carries the post-translational modification N6-acetyllysine.

Belongs to the actin family. ARP2 subfamily. Component of the Arp2/3 complex composed of ACTR2/ARP2, ACTR3/ARP3, ARPC1B/p41-ARC, ARPC2/p34-ARC, ARPC3/p21-ARC, ARPC4/p20-ARC and ARPC5/p16-ARC.

It localises to the cytoplasm. Its subcellular location is the cytoskeleton. The protein localises to the cell projection. It is found in the nucleus. In terms of biological role, ATP-binding component of the Arp2/3 complex, a multiprotein complex that mediates actin polymerization upon stimulation by nucleation-promoting factor (NPF). The Arp2/3 complex mediates the formation of branched actin networks in the cytoplasm, providing the force for cell motility. Seems to contact the pointed end of the daughter actin filament. In addition to its role in the cytoplasmic cytoskeleton, the Arp2/3 complex also promotes actin polymerization in the nucleus, thereby regulating gene transcription and repair of damaged DNA. The Arp2/3 complex promotes homologous recombination (HR) repair in response to DNA damage by promoting nuclear actin polymerization, leading to drive motility of double-strand breaks (DSBs). This chain is Actin-related protein 2 (Actr2), found in Rattus norvegicus (Rat).